Here is a 339-residue protein sequence, read N- to C-terminus: Bifunctional NMN adenylyltransferase/Nudix hydrolase (339 aa).

Residues Met-1–Gln-183 are NMN adenylyltransferase. The Nudix hydrolase domain occupies Pro-199–Phe-335. Residues Gly-233 to Arg-254 carry the Nudix box motif.

In the N-terminal section; belongs to the archaeal NMN adenylyltransferase family. The cofactor is Mg(2+). It depends on Mn(2+) as a cofactor.

Its subcellular location is the cytoplasm. It carries out the reaction beta-nicotinamide D-ribonucleotide + ATP + H(+) = diphosphate + NAD(+). It participates in cofactor biosynthesis; NAD(+) biosynthesis; NAD(+) from nicotinamide D-ribonucleotide: step 1/1. Its function is as follows. The Nudix hydrolase domain is active on ADP-ribose, (2')-phospho-ADP-ribose, IDP-ribose and NADPH. The protein is Bifunctional NMN adenylyltransferase/Nudix hydrolase of Synechocystis sp. (strain ATCC 27184 / PCC 6803 / Kazusa).